The chain runs to 70 residues: Putative membrane protein insertion efficiency factor (70 aa).

This sequence belongs to the UPF0161 family.

The protein resides in the cell membrane. Functionally, could be involved in insertion of integral membrane proteins into the membrane. The protein is Putative membrane protein insertion efficiency factor of Chloroflexus aurantiacus (strain ATCC 29366 / DSM 635 / J-10-fl).